The following is a 336-amino-acid chain: 4-hydroxy-3-methylbut-2-enyl diphosphate reductase (336 aa).

Residue Cys-37 coordinates [4Fe-4S] cluster. (2E)-4-hydroxy-3-methylbut-2-enyl diphosphate is bound by residues His-66 and His-99. The dimethylallyl diphosphate site is built by His-66 and His-99. The isopentenyl diphosphate site is built by His-66 and His-99. Residue Cys-121 participates in [4Fe-4S] cluster binding. Position 149 (His-149) interacts with (2E)-4-hydroxy-3-methylbut-2-enyl diphosphate. Residue His-149 participates in dimethylallyl diphosphate binding. Residue His-149 coordinates isopentenyl diphosphate. Glu-151 acts as the Proton donor in catalysis. Residue Thr-189 coordinates (2E)-4-hydroxy-3-methylbut-2-enyl diphosphate. Cys-219 provides a ligand contact to [4Fe-4S] cluster. (2E)-4-hydroxy-3-methylbut-2-enyl diphosphate contacts are provided by Ser-247, Ser-248, Asn-249, and Ser-292. Ser-247, Ser-248, Asn-249, and Ser-292 together coordinate dimethylallyl diphosphate. Isopentenyl diphosphate is bound by residues Ser-247, Ser-248, Asn-249, and Ser-292.

The protein belongs to the IspH family. [4Fe-4S] cluster is required as a cofactor.

The catalysed reaction is isopentenyl diphosphate + 2 oxidized [2Fe-2S]-[ferredoxin] + H2O = (2E)-4-hydroxy-3-methylbut-2-enyl diphosphate + 2 reduced [2Fe-2S]-[ferredoxin] + 2 H(+). The enzyme catalyses dimethylallyl diphosphate + 2 oxidized [2Fe-2S]-[ferredoxin] + H2O = (2E)-4-hydroxy-3-methylbut-2-enyl diphosphate + 2 reduced [2Fe-2S]-[ferredoxin] + 2 H(+). The protein operates within isoprenoid biosynthesis; dimethylallyl diphosphate biosynthesis; dimethylallyl diphosphate from (2E)-4-hydroxy-3-methylbutenyl diphosphate: step 1/1. It functions in the pathway isoprenoid biosynthesis; isopentenyl diphosphate biosynthesis via DXP pathway; isopentenyl diphosphate from 1-deoxy-D-xylulose 5-phosphate: step 6/6. Its function is as follows. Catalyzes the conversion of 1-hydroxy-2-methyl-2-(E)-butenyl 4-diphosphate (HMBPP) into a mixture of isopentenyl diphosphate (IPP) and dimethylallyl diphosphate (DMAPP). Acts in the terminal step of the DOXP/MEP pathway for isoprenoid precursor biosynthesis. The chain is 4-hydroxy-3-methylbut-2-enyl diphosphate reductase from Rhodococcus opacus (strain B4).